The chain runs to 319 residues: Olfactory receptor 8U3 (319 aa).

Residues 1 to 25 (MAEVNISYVSEFILKGITDRPELQA) lie on the Extracellular side of the membrane. Asn-5 carries an N-linked (GlcNAc...) asparagine glycan. The chain crosses the membrane as a helical span at residues 26 to 46 (PCFVMFLTIYLVTVLGNLGLI). Over 47–54 (VIIRVDSR) the chain is Cytoplasmic. A helical transmembrane segment spans residues 55 to 75 (LHTPMYFFLSHLAFVDLCYSS). The Extracellular segment spans residues 76-99 (AITPKMMVNFVVERNTIPFHACAT). The cysteines at positions 97 and 189 are disulfide-linked. The helical transmembrane segment at 100–120 (QLGCFLTFMITECFLLASMAY) threads the bilayer. The Cytoplasmic portion of the chain corresponds to 121 to 133 (DRYVAICSPLHYS). A helical transmembrane segment spans residues 134–154 (TLMSKRVCIQLVAVPYVYSFL). Residues 155–196 (VALFHTIITFRLTYCGPNVINHFYCDDLPLLALSCSDTHMKE) are Extracellular-facing. The chain crosses the membrane as a helical span at residues 197–217 (ILIFAFAGFDMICSSSIVLTS). The Cytoplasmic segment spans residues 218-237 (YLFIIAAILRIRSTQGRRKA). A helical transmembrane segment spans residues 238 to 258 (ISTCGSHMVAVTIFYGTLIFM). At 259–271 (YLQPKSNHSLDTD) the chain is on the extracellular side. Asn-265 carries an N-linked (GlcNAc...) asparagine glycan. The helical transmembrane segment at 272–292 (KMASVFYTVVIPMLNPLIYSL) threads the bilayer. Residues 293–319 (RNKEVKDASKKALDKGYETLKILRLSK) lie on the Cytoplasmic side of the membrane.

Belongs to the G-protein coupled receptor 1 family.

It localises to the cell membrane. Its function is as follows. Potential odorant receptor. The protein is Olfactory receptor 8U3 of Mus musculus (Mouse).